A 431-amino-acid polypeptide reads, in one-letter code: uncharacterized protein (431 aa).

Residues 1 to 258 form the Peptidase S8 domain; it reads MPSQMREAIT…HGLIDLERAG (258 aa).

The protein belongs to the peptidase S8 family.

This is an uncharacterized protein from Sinorhizobium fredii (strain NBRC 101917 / NGR234).